Consider the following 484-residue polypeptide: MGKDKTLPLLDPREPPELTGTKSASKVWAKEFGEESKRLWELAGPAIFTAISQYSLGALTQTFSGRLGELELAAVSVENSVISGLAFGVMLGMGSALETLCGQAYGAGQIRMMGIYMQRSWVILFTTALFLLPVYIWAPPILSFFGEAPHISKAAGKFALWMIPQLFAYAANFPIQKFLQSQRKVLVMAWISGVVLVIHAVFSWLFILYFKWGLVGAAITLNTSWWLIVIGQLLYILITKSDGAWTGFSMLAFRDLYGFVKLSLASALMLCLEFWYLMVLVVVTGLLPNPLIPVDAISICMNIEGWTAMISIGFNAAISVRVSNELGAGNAALAKFSVIVVSITSTLIGIVCMIVVLATKDSFPYLFTSSEAVAAETTRIAVLLGFTVLLNSLQPVLSGVAVGAGWQALVAYVNIACYYIIGLPAGLVLGFTLDLGVQGIWGGMVAGICLQTLILIGIIYFTNWNKEAEQAESRVQRWGGTAQE.

The segment covering 1–16 (MGKDKTLPLLDPREPP) has biased composition (basic and acidic residues). The interval 1-22 (MGKDKTLPLLDPREPPELTGTK) is disordered. 12 helical membrane passes run 39 to 59 (LWELAGPAIFTAISQYSLGAL), 81 to 101 (VISGLAFGVMLGMGSALETLC), 122 to 142 (VILFTTALFLLPVYIWAPPIL), 155 to 175 (AGKFALWMIPQLFAYAANFPI), 190 to 210 (WISGVVLVIHAVFSWLFILYF), 218 to 238 (AITLNTSWWLIVIGQLLYILI), 267 to 287 (ALMLCLEFWYLMVLVVVTGLL), 294 to 314 (VDAISICMNIEGWTAMISIGF), 338 to 358 (VIVVSITSTLIGIVCMIVVLA), 380 to 400 (IAVLLGFTVLLNSLQPVLSGV), 409 to 429 (LVAYVNIACYYIIGLPAGLVL), and 439 to 459 (GIWGGMVAGICLQTLILIGII).

Belongs to the multi antimicrobial extrusion (MATE) (TC 2.A.66.1) family.

The protein resides in the membrane. This Arabidopsis thaliana (Mouse-ear cress) protein is Protein DETOXIFICATION 33.